The following is a 189-amino-acid chain: Peptidyl-tRNA hydrolase (189 aa).

TRNA is bound at residue tyrosine 15. Histidine 20 functions as the Proton acceptor in the catalytic mechanism. The tRNA site is built by phenylalanine 66, asparagine 68, and asparagine 114.

This sequence belongs to the PTH family. Monomer.

The protein resides in the cytoplasm. It catalyses the reaction an N-acyl-L-alpha-aminoacyl-tRNA + H2O = an N-acyl-L-amino acid + a tRNA + H(+). Its function is as follows. Hydrolyzes ribosome-free peptidyl-tRNAs (with 1 or more amino acids incorporated), which drop off the ribosome during protein synthesis, or as a result of ribosome stalling. In terms of biological role, catalyzes the release of premature peptidyl moieties from peptidyl-tRNA molecules trapped in stalled 50S ribosomal subunits, and thus maintains levels of free tRNAs and 50S ribosomes. This Streptococcus pyogenes serotype M6 (strain ATCC BAA-946 / MGAS10394) protein is Peptidyl-tRNA hydrolase.